Here is a 41-residue protein sequence, read N- to C-terminus: Urotensin-1 (41 aa).

At Val41 the chain carries Valine amide.

It belongs to the sauvagine/corticotropin-releasing factor/urotensin I family.

The protein localises to the secreted. Urotensin is found in the teleost caudal neurosecretory system. It has a suggested role in osmoregulation and as a corticotropin-releasing factor. This is Urotensin-1 from Catostomus commersonii (White sucker).